Reading from the N-terminus, the 1136-residue chain is MRHTGSWKLWTWVTTFLLPACTCLTVRDKPETTCPTLRTERYQDDRNKSELSGFDLGESFALRHAFCEGDKTCFKLGSVLLIRDTVKIFPKGLPEEYAIAVMFRVRRSTKKERWFLWKILNQQNMAQISVVIDGTKKVVEFMFRGAEGDLLNYVFKNRELRPLFDRQWHKLGIGVQSRVLSLYMDCNLIASRHTEEKNSVDFQGRTIIAARASDGKPVDIELHQLRIYCNANFLAEESCCNLSPTKCPEQDDFGSTTSSWGTSNTGKMSSYLPGKQELKDTCQCIPNKEEAGLPGTLRSIGHKGDKGEPGEHGLDGTPGLPGQKGEQGLEGIKGEIGEKGEPGAKGDSGLDGLNGQDGLKGDSGPQGPPGPKGDKGDMGPPGPPALTGSIGIQGPQGPPGKEGQRGRRGKTGPPGNPGPPGPPGPPGLQGLQQPFGGYFNKGTGEHGASGPKGEKGDTGLPGFPGSVGPKGHKGEPGEPLTKGEKGDRGEPGLLGPQGIKGEPGDPGPPGLLGSPGLKGQQGPAGSMGPRGPPGDVGLPGEHGIPGKQGVKGEKGDPGGRLGPPGLPGLKGDAGPPGISLPGKPGLDGNPGSPGPRGPKGERGLPGLHGSPGDTGPPGVGIPGRTGSQGPAGEPGIQGPRGLPGLPGTPGMPGNDGAPGKDGKPGLPGPPGDPIALPLLGDIGALLKNFCGNCQANVPGLKSIKGDDGSTGEPGKYDPAARKGDVGPRGPPGFPGREGPKGSKGERGYPGIHGEKGDEGLQGIPGLSGAPGPTGPPGLTGRTGHPGPTGAKGDKGSEGPPGKPGPPGPPGVPLNEGNGMSSLYKIQGGVNVPGYPGPPGPPGPKGDPGPVGEPGAMGLPGLEGFPGVKGDRGPAGPPGIAGISGKPGAPGPPGVPGEQGERGPIGDTGFPGPEGPSGKPGINGKDGLPGAQGIMGKPGDRGPKGERGDQGIPGDRGPQGERGKPGLTGMKGAIGPVGPAGSKGSTGPPGHQGPPGNPGIPGTPADAVSFEEIKHYINQEVLRIFEERMAVFLSQLKLPAAMLSAQAHGRPGPPGKDGLPGPPGDPGPQGYRGQKGERGEPGIGLPGSPGLPGSSAVGLPGSPGAPGPQGPPGPSGRCNPEDCLYPAPPPHQQAGGK.

The first 23 residues, 1-23, serve as a signal peptide directing secretion; the sequence is MRHTGSWKLWTWVTTFLLPACTC. N-linked (GlcNAc...) asparagine glycosylation is present at asparagine 47. One can recognise a Laminin G-like domain in the interval 47–231; that stretch reads NKSELSGFDL…LHQLRIYCNA (185 aa). Disordered regions lie at residues 252 to 272, 289 to 673, 699 to 1005, and 1043 to 1136; these read DFGS…SSYL, EEAG…PGDP, GLKS…TPAD, and SAQA…AGGK. Residues 254–266 are compositionally biased toward low complexity; that stretch reads GSTTSSWGTSNTG. A triple-helical region 1 (COL1) region spans residues 289–348; sequence EEAGLPGTLRSIGHKGDKGEPGEHGLDGTPGLPGQKGEQGLEGIKGEIGEKGEPGAKGDS. 3 consecutive Collagen-like domains span residues 292–346, 347–388, and 389–430; these read GLPG…GAKG, DSGL…ALTG, and SIGI…GLQG. 2 stretches are compositionally biased toward basic and acidic residues: residues 302-314 and 332-344; these read HKGD…EHGL and IKGE…EPGA. The triple-helical region 2 (COL2) stretch occupies residues 367–426; it reads GPPGPKGDKGDMGPPGPPALTGSIGIQGPQGPPGKEGQRGRRGKTGPPGNPGPPGPPGPP. Over residues 387–401 the composition is skewed to low complexity; it reads TGSIGIQGPQGPPGK. The segment covering 414 to 426 has biased composition (pro residues); the sequence is PGNPGPPGPPGPP. A compositionally biased stretch (low complexity) spans 428-437; the sequence is LQGLQQPFGG. The tract at residues 442 to 682 is triple-helical region 3 (COL3); that stretch reads GTGEHGASGP…PIALPLLGDI (241 aa). Over residues 472–490 the composition is skewed to basic and acidic residues; the sequence is HKGEPGEPLTKGEKGDRGE. 2 stretches are compositionally biased toward low complexity: residues 511 to 523 and 567 to 577; these read LLGS…QQGP and PGLKGDAGPPG. 6 Collagen-like domains span residues 519-577, 578-618, 620-673, 722-777, 778-810, and 833-891; these read GQQG…GPPG, ISLP…GPPG, GIPG…PGDP, KGDV…GPPG, LTGR…GPPG, and GYPG…APGP. The segment covering 634 to 645 has biased composition (low complexity); that stretch reads PGIQGPRGLPGL. The interval 694-812 is triple-helical region 4 (COL4); that stretch reads QANVPGLKSI…PGPPGPPGVP (119 aa). Composition is skewed to basic and acidic residues over residues 714–725 and 737–758; these read GKYDPAARKGDV and EGPK…KGDE. Low complexity predominate over residues 764–788; it reads PGLSGAPGPTGPPGLTGRTGHPGPT. Pro residues-rich tracts occupy residues 800–811 and 834–846; these read PGKPGPPGPPGV and YPGP…PKGD. Residues 827–1006 are triple-helical region 5 (COL5); sequence GGVNVPGYPG…PGIPGTPADA (180 aa). Positions 877–886 are enriched in low complexity; the sequence is PGIAGISGKP. Over residues 937 to 948 the composition is skewed to basic and acidic residues; that stretch reads PGDRGPKGERGD. Positions 946–948 match the Cell attachment site motif; that stretch reads RGD. A triple-helical region 6 (COL6) region spans residues 1048–1105; sequence GRPGPPGKDGLPGPPGDPGPQGYRGQKGERGEPGIGLPGSPGLPGSSAVGLPGSPGAP. Positions 1087 to 1101 are enriched in low complexity; that stretch reads SPGLPGSSAVGLPGS. The segment covering 1102–1113 has biased composition (pro residues); the sequence is PGAPGPQGPPGP.

Belongs to the fibril-associated collagens with interrupted helices (FACIT) family. As to quaternary structure, oligomer; disulfide-linked. Prolines at the third position of the tripeptide repeating unit (G-X-Y) are hydroxylated in some or all of the chains.

Its subcellular location is the secreted. It is found in the extracellular space. The protein localises to the extracellular matrix. In terms of biological role, may act as a cross-bridge between fibrils and other extracellular matrix molecules. Involved in skeletal myogenesis in the developing esophagus. May play a role in organization of the pericellular matrix or the sphinteric smooth muscle. The sequence is that of Collagen alpha-1(XIX) chain from Mus musculus (Mouse).